We begin with the raw amino-acid sequence, 440 residues long: IAA-amino acid hydrolase ILR1-like 4 (440 aa).

The N-terminal stretch at 1 to 23 is a signal peptide; the sequence is MSFFKWVSFVLILHLLNPTLISC. 5 residues coordinate Mn(2+): C134, H136, E170, H194, and H397. Residues 437–440 carry the Prevents secretion from ER motif; the sequence is KDEL.

This sequence belongs to the peptidase M20 family. Requires Mn(2+) as cofactor. Expressed in leaves, stems, roots, siliques and flowers. Detected in the vascular tissue of cotyledons and roots, in adult leaves, stems, siliques, petals, hydathodes and in silique abscission zones and funicles.

The protein resides in the endoplasmic reticulum lumen. It catalyses the reaction a jasmonyl-L-amino acid + H2O = a jasmonate + an L-alpha-amino acid. In terms of biological role, hydrolyzes certain amino acid conjugates of the plant growth regulator indole-3-acetic acid (IAA), including IAA-Ala, IAA-Asn, IAA-Cys, IAA-Glu, IAA-Met, IAA-Ser and IAA-Gly. Has a lower efficiency with IAA-Phe, IAA-Leu and IAA-Val and no activity with IAA-Ile. Important for IAA-Leu hydrolysis in roots. Also hydrolyzes amino acid conjugates of jasmonic acid and 12-hydroxy jasmonic acid. The polypeptide is IAA-amino acid hydrolase ILR1-like 4 (Arabidopsis thaliana (Mouse-ear cress)).